A 174-amino-acid chain; its full sequence is Adipose-secreted signaling protein (174 aa).

This sequence belongs to the ADISSP family.

The protein localises to the secreted. May be involved in thermogenesis and glucose homeostasis. In Xenopus tropicalis (Western clawed frog), this protein is Adipose-secreted signaling protein.